A 487-amino-acid chain; its full sequence is Putative sugar kinase YoaC (487 aa).

This sequence belongs to the FGGY kinase family.

The chain is Putative sugar kinase YoaC (yoaC) from Bacillus subtilis (strain 168).